Consider the following 293-residue polypeptide: Nucleotide-binding protein Bcer98_3698 (293 aa).

An ATP-binding site is contributed by 14 to 21 (GMSGAGKT). Residue 65–68 (DLRG) coordinates GTP.

Belongs to the RapZ-like family.

In terms of biological role, displays ATPase and GTPase activities. This is Nucleotide-binding protein Bcer98_3698 from Bacillus cytotoxicus (strain DSM 22905 / CIP 110041 / 391-98 / NVH 391-98).